The primary structure comprises 319 residues: Protease HtpX homolog (319 aa).

Transmembrane regions (helical) follow at residues 6-26 (TAML…VIGG) and 28-48 (GGMM…YWNS). H130 serves as a coordination point for Zn(2+). E131 is an active-site residue. H134 contributes to the Zn(2+) binding site. 2 helical membrane passes run 145–165 (LTAT…FFGG) and 172–192 (PLGF…AMLV). E201 serves as a coordination point for Zn(2+). The segment at 277–319 (MARETSTGSTAPVRPDNAGRKSRSVPRTGWGRGGSEPPKGPWS) is disordered.

The protein belongs to the peptidase M48B family. Zn(2+) is required as a cofactor.

It is found in the cell inner membrane. The protein is Protease HtpX homolog of Rhizobium meliloti (strain 1021) (Ensifer meliloti).